The sequence spans 226 residues: 2-amino-5-formylamino-6-ribosylaminopyrimidin-4(3H)-one 5'-monophosphate deformylase (226 aa).

Fe cation-binding residues include E29, H31, D40, and H108.

The protein belongs to the creatininase superfamily. FAPy deformylase family. In terms of assembly, homodimer. It depends on Fe(2+) as a cofactor. The cofactor is Zn(2+).

The catalysed reaction is 2-amino-5-formylamino-6-(5-phospho-D-ribosylamino)pyrimidin-4(3H)-one + H2O = 2,5-diamino-6-(1-D-ribosylamino)pyrimidin-4(3H)-one 5'-phosphate + formate + H(+). Its pathway is cofactor biosynthesis; coenzyme F420 biosynthesis. The protein operates within cofactor biosynthesis; riboflavin biosynthesis. In terms of biological role, catalyzes the hydrolysis of the formamide of 2-amino-5-formylamino-6-ribosylamino-4(3H)-pyrimidinone 5'-monophosphate (FAPy) to form 2,5-diamino-6-ribosylamino-4(3H)-pyrimidinone 5'-phosphate (APy). This Methanocaldococcus vulcanius (strain ATCC 700851 / DSM 12094 / M7) (Methanococcus vulcanius) protein is 2-amino-5-formylamino-6-ribosylaminopyrimidin-4(3H)-one 5'-monophosphate deformylase.